We begin with the raw amino-acid sequence, 44 residues long: FKIISFLSTIFLGFFIISTTIYSIYMGFGPMSRKLKDPFEEHEN.

The chain crosses the membrane as a helical span at residues 3–23; it reads IISFLSTIFLGFFIISTTIYS.

This sequence belongs to the PsbN family.

It localises to the plastid. It is found in the chloroplast thylakoid membrane. May play a role in photosystem I and II biogenesis. The protein is Putative protein PsbN of Euglena gracilis.